The primary structure comprises 348 residues: tRNA N6-adenosine threonylcarbamoyltransferase (348 aa).

Fe cation is bound by residues histidine 111 and histidine 115. Residues leucine 134–glycine 138, aspartate 167, glycine 180, aspartate 184, and asparagine 279 each bind substrate. Aspartate 307 serves as a coordination point for Fe cation.

The protein belongs to the KAE1 / TsaD family. Fe(2+) serves as cofactor.

The protein resides in the cytoplasm. The enzyme catalyses L-threonylcarbamoyladenylate + adenosine(37) in tRNA = N(6)-L-threonylcarbamoyladenosine(37) in tRNA + AMP + H(+). Functionally, required for the formation of a threonylcarbamoyl group on adenosine at position 37 (t(6)A37) in tRNAs that read codons beginning with adenine. Is involved in the transfer of the threonylcarbamoyl moiety of threonylcarbamoyl-AMP (TC-AMP) to the N6 group of A37, together with TsaE and TsaB. TsaD likely plays a direct catalytic role in this reaction. This chain is tRNA N6-adenosine threonylcarbamoyltransferase, found in Synechocystis sp. (strain ATCC 27184 / PCC 6803 / Kazusa).